The primary structure comprises 254 residues: Cold shock-induced protein TIR1 (254 aa).

Positions 1 to 18 are cleaved as a signal peptide; the sequence is MAYTKIALFAAIAALASA. The tract at residues 110–213 is disordered; sequence NGDASSSAAP…SSTGAKTSAI (104 aa). The span at 113-197 shows a compositional bias: low complexity; that stretch reads ASSSAAPSSS…SAAPSSTEAK (85 aa). Tandem repeats lie at residues 114–119, 120–125, 126–131, 132–137, 138–143, 144–155, 156–167, 168–179, 180–191, and 192–203. Positions 114–143 are 5 X 6 AA approximate tandem repeats, Ala/Ser-rich; that stretch reads SSSAAPSSSAAPTSSAAPSSSAAPTSSAAS. Positions 144 to 203 are 5 X 12 AA approximate tandem repeats, Ala/Ser-rich; it reads SSSEAKSSSAAPSSSEAKSSSAAPSSSEAKSSSAAPSSSEAKSSSAAPSSTEAKITSAAP. Residues 201 to 213 are compositionally biased toward polar residues; sequence AAPSSTGAKTSAI. Residues 210–224 form a PIR1/2/3 repeat; sequence TSAISQITDGQIQAT. The GPI-anchor amidated asparagine moiety is linked to residue asparagine 233. Positions 234 to 254 are cleaved as a propeptide — removed in mature form; it reads GAAKAFVGMGAGVVAAAAMLL.

Belongs to the SRP1/TIP1 family. Post-translationally, O-glycosylated. In terms of processing, the GPI-anchor is attached to the protein in the endoplasmic reticulum and serves to target the protein to the cell surface. There, the glucosamine-inositol phospholipid moiety is cleaved off and the GPI-modified mannoprotein is covalently attached via its lipidless GPI glycan remnant to the 1,6-beta-glucan of the outer cell wall layer. Covalently linked to beta-1,3-glucan of the inner cell wall layer via an alkali-sensitive ester linkage between the gamma-carboxyl group of glutamic acids, arising from a specific glutamine within the PIR1/2/3 repeat, and hydroxyl groups of glucoses of beta-1,3-glucan chains.

It localises to the secreted. Its subcellular location is the cell wall. It is found in the membrane. Component of the cell wall. Required for anaerobic growth. This chain is Cold shock-induced protein TIR1 (TIR1), found in Saccharomyces cerevisiae (strain ATCC 204508 / S288c) (Baker's yeast).